We begin with the raw amino-acid sequence, 465 residues long: Tubulin gamma chain (465 aa).

Residue 144–150 (AGGTGSG) coordinates GTP.

This sequence belongs to the tubulin family.

The protein resides in the cytoplasm. It is found in the cytoskeleton. It localises to the microtubule organizing center. The protein localises to the spindle pole body. Its function is as follows. Tubulin is the major constituent of microtubules. The gamma chain is found at microtubule organizing centers (MTOC) such as the spindle poles or the centrosome, suggesting that it is involved in the minus-end nucleation of microtubule assembly. The polypeptide is Tubulin gamma chain (TUB4) (Candida glabrata (strain ATCC 2001 / BCRC 20586 / JCM 3761 / NBRC 0622 / NRRL Y-65 / CBS 138) (Yeast)).